A 216-amino-acid chain; its full sequence is Flagellin B2 (216 aa).

Residues 1 to 12 constitute a propeptide that is removed on maturation; it reads MKIKEFMSNKKG. Residues Asn38, Asn72, Asn77, Asn113, Asn172, and Asn208 are each glycosylated (N-linked (GlcNAc...) asparagine).

The protein belongs to the archaeal flagellin family. N-linked glycans consist of the 779 Da trisaccharide beta-ManNAc(Thr)-(1-4)-beta-GlcNAc3NAcA-(1-3)-beta-GlcNAc.

It is found in the archaeal flagellum. Its function is as follows. Flagellin is the subunit protein which polymerizes to form the filaments of archaeal flagella. The protein is Flagellin B2 (flaB2) of Methanococcus voltae.